Consider the following 538-residue polypeptide: Chaperonin GroEL (538 aa).

Residues 29-32, 86-90, Gly413, 476-478, and Asp492 contribute to the ATP site; these read TIGP, DGTTT, and NAA.

The protein belongs to the chaperonin (HSP60) family. As to quaternary structure, forms a cylinder of 14 subunits composed of two heptameric rings stacked back-to-back. Interacts with the co-chaperonin GroES.

Its subcellular location is the cytoplasm. It carries out the reaction ATP + H2O + a folded polypeptide = ADP + phosphate + an unfolded polypeptide.. In terms of biological role, together with its co-chaperonin GroES, plays an essential role in assisting protein folding. The GroEL-GroES system forms a nano-cage that allows encapsulation of the non-native substrate proteins and provides a physical environment optimized to promote and accelerate protein folding. The protein is Chaperonin GroEL of Staphylococcus aureus (strain NCTC 8325 / PS 47).